Here is a 123-residue protein sequence, read N- to C-terminus: UPF0102 protein MCA0184 (123 aa).

Belongs to the UPF0102 family.

The sequence is that of UPF0102 protein MCA0184 from Methylococcus capsulatus (strain ATCC 33009 / NCIMB 11132 / Bath).